The sequence spans 190 residues: Dynein axonemal light chain 1 (190 aa).

N-acetylalanine is present on A2. LRR repeat units follow at residues 49–70 (NCEKLSLSTNCIEKIANLNGLK), 71–92 (NLRILSLGRNNIKNLNGLEAVG), 94–115 (TLEELWISYNFIEKLKGIHVMK), and 116–137 (KLKILYMSNNLVKDWAEFVKLA). A Phosphoserine modification is found at S56. An LRRCT domain is found at 150 to 190 (NPLEEKHSAEGNWVEEATKRVPKLKKLDGTPVIKEDEEEDN).

Belongs to the dynein light chain LC1-type family. Interacts with ZMYND10 (via C-terminus). Interacts with DNAH5, a outer arm dynein heavy chain. Interacts with tubulin located within the A-tubule of the outer doublets in a ATP-independent manner.

It is found in the cytoplasm. Its subcellular location is the cytoskeleton. It localises to the cilium axoneme. In terms of biological role, part of the multisubunit axonemal ATPase complexes that generate the force for cilia motility and govern beat frequency. Component of the outer arm dynein (ODA). May be involved in a mechanosensory feedback mechanism controlling ODA activity based on external conformational cues by tethering the outer arm dynein heavy chain (DNAH5) to the microtubule within the axoneme. Important for ciliary function in the airways and for the function of the cilia that produce the nodal flow essential for the determination of the left-right asymmetry. The protein is Dynein axonemal light chain 1 (DNAL1) of Bos taurus (Bovine).